A 595-amino-acid chain; its full sequence is uncharacterized protein (595 aa).

Disordered regions lie at residues 50 to 159 (VNPS…KTKK), 398 to 430 (TYPT…PPSL), and 450 to 595 (VTEG…SLDK). The span at 83-122 (SNKSSALKKSNKSSNKSSNKSSNKSSNKSSNKSSNKSSNK) shows a compositional bias: low complexity. A compositionally biased stretch (basic and acidic residues) spans 123-132 (FPDKSDKSDS). Residues 137 to 146 (DNSDDSDDSS) show a composition bias toward acidic residues. Residues 398–409 (TYPTTPLFSEPT) are compositionally biased toward low complexity. The segment covering 410–420 (IPKPPQQPTTE) has biased composition (pro residues). The segment covering 421-430 (PPSGFKPPSL) has biased composition (low complexity). Basic and acidic residues predominate over residues 454–463 (KVVESDDHTS). Over residues 467 to 476 (IPPPPPPPPS) the composition is skewed to pro residues. Residues 477–529 (ISSDNSSPNKSVKSSTKSSTKSSTKSSTKSSTKSSTKSPSKTPVKSPIKSSSK) show a composition bias toward low complexity. Residues 530-542 (LSDKKSPTKKIES) show a composition bias toward basic and acidic residues. Residues 544–553 (GESDSESDSE) are compositionally biased toward acidic residues. A compositionally biased stretch (basic residues) spans 559–570 (TKKSTNKIKKIT). Residues 571–580 (NNKLENSNTK) are compositionally biased toward low complexity. The span at 581 to 595 (NNKKFSKKKTISLDK) shows a compositional bias: basic residues.

This is an uncharacterized protein from Acanthamoeba polyphaga mimivirus (APMV).